The following is a 1357-amino-acid chain: DNA-directed RNA polymerase subunit beta (1357 aa).

Belongs to the RNA polymerase beta chain family. In terms of assembly, the RNAP catalytic core consists of 2 alpha, 1 beta, 1 beta' and 1 omega subunit. When a sigma factor is associated with the core the holoenzyme is formed, which can initiate transcription.

It catalyses the reaction RNA(n) + a ribonucleoside 5'-triphosphate = RNA(n+1) + diphosphate. DNA-dependent RNA polymerase catalyzes the transcription of DNA into RNA using the four ribonucleoside triphosphates as substrates. The polypeptide is DNA-directed RNA polymerase subunit beta (Hahella chejuensis (strain KCTC 2396)).